The chain runs to 122 residues: Large ribosomal subunit protein bL12 (122 aa).

This sequence belongs to the bacterial ribosomal protein bL12 family. In terms of assembly, homodimer. Part of the ribosomal stalk of the 50S ribosomal subunit. Forms a multimeric L10(L12)X complex, where L10 forms an elongated spine to which 2 to 4 L12 dimers bind in a sequential fashion. Binds GTP-bound translation factors.

In terms of biological role, forms part of the ribosomal stalk which helps the ribosome interact with GTP-bound translation factors. Is thus essential for accurate translation. This chain is Large ribosomal subunit protein bL12, found in Mycoplasma capricolum subsp. capricolum (strain California kid / ATCC 27343 / NCTC 10154).